Reading from the N-terminus, the 477-residue chain is Alanine--glyoxylate aminotransferase 2 homolog 2, mitochondrial (477 aa).

A mitochondrion-targeting transit peptide spans methionine 1 to isoleucine 22. Pyridoxal 5'-phosphate-binding positions include glycine 165–threonine 166, tyrosine 192, and aspartate 292–glutamine 295. Residue lysine 321 is modified to N6-(pyridoxal phosphate)lysine. Position 350 (threonine 350) interacts with pyridoxal 5'-phosphate.

It belongs to the class-III pyridoxal-phosphate-dependent aminotransferase family. Homotetramer. Interacts with GRF3. Requires pyridoxal 5'-phosphate as cofactor.

The protein resides in the mitochondrion. It carries out the reaction glyoxylate + L-alanine = glycine + pyruvate. In Arabidopsis thaliana (Mouse-ear cress), this protein is Alanine--glyoxylate aminotransferase 2 homolog 2, mitochondrial (AGT3).